The chain runs to 281 residues: Ras-related protein Rab-40C (281 aa).

The GTP site is built by Ser-23, Gly-26, Lys-27, and Ser-46. Residues 41 to 49 are switch-I; that stretch reads SPYAYSNGI. Residues Ser-46 and Asp-69 each coordinate Mg(2+). Gly-72, Asn-126, and Arg-127 together coordinate GTP. Positions 72–88 are switch-II; sequence GQGRFCTIFRSYSRGAQ. The 54-residue stretch at 175–228 folds into the SOCS box domain; that stretch reads LMRHGMEKIWRPNRVFSLQDLCCRAIVSCTPVHLIDKLPLPVTIKSHLKSFSMA. Positions 245–281 are disordered; it reads SGAGGGGSKGNSLKRSKSIRPPQSPPQNCSRSNCKIS. Over residues 270–281 the composition is skewed to polar residues; that stretch reads PQNCSRSNCKIS. Cys-273 is lipidated: S-palmitoyl cysteine. Cys-278 is lipidated: S-geranylgeranyl cysteine.

Belongs to the small GTPase superfamily. Rab family. As to quaternary structure, component of the cullin-5-RING E3 ubiquitin-protein ligase complex (ECS(RAB40C) complex) composed of CUL5, Elongin BC (ELOB and ELOC), RNF7/RBX2 and RAB40C. Interacts with protein phosphatase 6 (PP6) complex components ANKRD28, ANKRD52, PPP6C, PP6R1 and PP6R2; the interaction leads to ANKRD28 ubiquitination and decreased PP6 activity. Interacts with DAB2IP; DAB2IP acts as a GAP for RAB40C. Mg(2+) is required as a cofactor.

It localises to the cell membrane. The protein localises to the cytoplasm. Its subcellular location is the cytosol. The protein resides in the golgi apparatus membrane. The catalysed reaction is GTP + H2O = GDP + phosphate + H(+). It functions in the pathway protein modification; protein ubiquitination. With respect to regulation, regulated by guanine nucleotide exchange factors (GEFs) which promote the exchange of bound GDP for free GTP. Regulated by GTPase activating proteins (GAPs) including DAB2IP, which increase the GTP hydrolysis activity. Inhibited by GDP dissociation inhibitors (GDIs). Its function is as follows. RAB40C small GTPase acts as substrate-recognition component of the ECS(RAB40C) E3 ubiquitin ligase complex which mediates the ubiquitination and subsequent proteasomal degradation of target proteins. The Rab40 subfamily belongs to the Rab family that are key regulators of intracellular membrane trafficking, from the formation of transport vesicles to their fusion with membranes. Rabs cycle between an inactive GDP-bound form and an active GTP-bound form that is able to recruit to membranes different sets of downstream effectors directly responsible for vesicle formation, movement, tethering and fusion. As part of the ECS(RAB40C) complex, mediates ANKRD28 ubiquitination and degradation, thereby inhibiting protein phosphatase 6 (PP6) complex activity and focal adhesion assembly during cell migration. Also negatively regulate lipid droplets accumulation in a GTP-dependent manner. In Homo sapiens (Human), this protein is Ras-related protein Rab-40C.